Here is a 524-residue protein sequence, read N- to C-terminus: FAD-dependent monooxygenase opdD (524 aa).

2 residues coordinate FAD: Glu-48 and Arg-145.

The protein belongs to the paxM FAD-dependent monooxygenase family.

The protein operates within secondary metabolite biosynthesis. FAD-dependent monooxygenase; part of the gene cluster that mediates the biosynthesis of oxopyrrolidines, polyketide-amino acid hybrid compounds with feature structures of tetramic acid. Does not seem to play a role in oxopyrrolidines A and B biosynthesis. May be involved in further modifications of these oxopyrrolidines. This Penicillium oxalicum (strain 114-2 / CGMCC 5302) (Penicillium decumbens) protein is FAD-dependent monooxygenase opdD.